We begin with the raw amino-acid sequence, 202 residues long: LexA repressor (202 aa).

The segment at residues 28–48 (RAEIAQRLGFRSPNAAEEHLK) is a DNA-binding region (H-T-H motif). Residues Ser-119 and Lys-156 each act as for autocatalytic cleavage activity in the active site.

It belongs to the peptidase S24 family. In terms of assembly, homodimer.

It catalyses the reaction Hydrolysis of Ala-|-Gly bond in repressor LexA.. Functionally, represses a number of genes involved in the response to DNA damage (SOS response), including recA and lexA. Binds to the 16 bp palindromic sequence 5'-CTGTATATATATACAG-3'. In the presence of single-stranded DNA, RecA interacts with LexA causing an autocatalytic cleavage which disrupts the DNA-binding part of LexA, leading to derepression of the SOS regulon and eventually DNA repair. In Klebsiella pneumoniae subsp. pneumoniae (strain ATCC 700721 / MGH 78578), this protein is LexA repressor.